A 1062-amino-acid chain; its full sequence is NACHT, LRR and PYD domains-containing protein 2 (1062 aa).

A Pyrin domain is found at 1–94 (MVSSAQMGFN…SERAKDEVRE (94 aa)). The region spanning 207-526 (YTVVLYGPAG…LEKEEEEDRD (320 aa)) is the NACHT domain. Position 213-220 (213-220 (GPAGLGKT)) interacts with ATP. Residue S671 is modified to Phosphoserine. 8 LRR repeats span residues 812–832 (SLTCVNLSDNELLDEGAKLLY), 841–861 (FLQRLSLENCHLTEANCKDLA), 869–889 (ELTHLCLAKNPIGNTGVKFLC), 898–918 (KLQTLVLWNCDITSDGCCDLT), 926–946 (SLLCLDLGLNHIGVKGMKFLC), 955–976 (NLRCLWLWGCSIPPFSCEDLCS), 983–1003 (SLVTLDLGQNPLGSSGVKMLF), and 1010–1033 (SGTLRTLRLKIDDFNDELNKLLEE).

This sequence belongs to the NLRP family. As to quaternary structure, interacts with CHUK. Interacts with IKBKB. Interacts with IKBKG. Interacts with MEFV. Interacts with PYCARD. Interacts (via pyrin domain) with PYDC2. Interacts with CARD8. As to expression, expressed at high levels in lung, placenta and thymus and at lower levels in ovary, intestine and brain. Highly abundant in oocytes and early embryos, however poorly expressed in somatic tissues such as brain, kidney, liver and spinal cord.

Its subcellular location is the cytoplasm. Functionally, suppresses TNF- and CD40-induced NFKB1 activity at the level of the IKK complex, by inhibiting NFKBIA degradation induced by TNF. When associated with PYCARD, activates CASP1, leading to the secretion of mature pro-inflammatory cytokine IL1B. May be a component of the inflammasome, a protein complex which also includes PYCARD, CARD8 and CASP1 and whose function would be the activation of pro-inflammatory caspases. The protein is NACHT, LRR and PYD domains-containing protein 2 (NLRP2) of Homo sapiens (Human).